Here is a 362-residue protein sequence, read N- to C-terminus: sn-glycerol-3-phosphate import ATP-binding protein UgpC (362 aa).

The 232-residue stretch at 4–235 (LSFRNVKKTY…PASTFVAGFI (232 aa)) folds into the ABC transporter domain. 37-44 (GPSGCGKS) contacts ATP.

The protein belongs to the ABC transporter superfamily. sn-glycerol-3-phosphate importer (TC 3.A.1.1.3) family. In terms of assembly, the complex is composed of two ATP-binding proteins (UgpC), two transmembrane proteins (UgpA and UgpE) and a solute-binding protein (UgpB).

It is found in the cell inner membrane. The enzyme catalyses sn-glycerol 3-phosphate(out) + ATP + H2O = sn-glycerol 3-phosphate(in) + ADP + phosphate + H(+). Functionally, part of the ABC transporter complex UgpBAEC involved in sn-glycerol-3-phosphate (G3P) import. Responsible for energy coupling to the transport system. This is sn-glycerol-3-phosphate import ATP-binding protein UgpC from Bordetella pertussis (strain Tohama I / ATCC BAA-589 / NCTC 13251).